The primary structure comprises 336 residues: N-((2S)-2-amino-2-carboxyethyl)-L-glutamate dehydrogenase (336 aa).

Lys-78 acts as the Proton donor/acceptor in catalysis. NAD(+) is bound by residues Arg-122 and Lys-242.

It belongs to the ornithine cyclodeaminase/mu-crystallin family. As to quaternary structure, homodimer.

The catalysed reaction is N-[(2S)-2-amino-2-carboxyethyl]-L-glutamate + NAD(+) + H2O = (S)-2,3-diaminopropanoate + 2-oxoglutarate + NADH + H(+). Its pathway is siderophore biosynthesis. Functionally, catalyzes the hydrolysis of N-((2S)-2-amino-2-carboxyethyl)-L-glutamate (ACEGA) to form L-2,3-diaminopropionic acid and 2-oxoglutarate. Involved in the biosynthesis of L-2,3-diaminopropionic acid (L-Dap), a precursor of staphyloferrin B and antibiotics. The chain is N-((2S)-2-amino-2-carboxyethyl)-L-glutamate dehydrogenase from Staphylococcus aureus (strain NCTC 8325 / PS 47).